A 319-amino-acid polypeptide reads, in one-letter code: Ribosomal RNA large subunit methyltransferase F (319 aa).

The protein belongs to the methyltransferase superfamily. METTL16/RlmF family.

Its subcellular location is the cytoplasm. It catalyses the reaction adenosine(1618) in 23S rRNA + S-adenosyl-L-methionine = N(6)-methyladenosine(1618) in 23S rRNA + S-adenosyl-L-homocysteine + H(+). In terms of biological role, specifically methylates the adenine in position 1618 of 23S rRNA. This Aliivibrio fischeri (strain ATCC 700601 / ES114) (Vibrio fischeri) protein is Ribosomal RNA large subunit methyltransferase F.